A 40-amino-acid chain; its full sequence is Antimicrobial peptide 1 (40 aa).

The region spanning 1 to 40 (AQCGAQGGGATCPGGLCCSQWGWCGSTPKYCGAGCQSNCK) is the Chitin-binding type-1 domain. 4 disulfides stabilise this stretch: Cys3–Cys18, Cys12–Cys24, Cys17–Cys31, and Cys35–Cys39.

Post-translationally, not glycosylated.

Antimicrobial peptide active against plant pathogenic fungi and Gram-negative and -positive bacteria. The protein is Antimicrobial peptide 1 of Fagopyrum esculentum (Common buckwheat).